Reading from the N-terminus, the 339-residue chain is Probable cytosolic iron-sulfur protein assembly protein CIAO1 (339 aa).

WD repeat units follow at residues 14-53 (HPDS…WICK), 59-98 (GHQR…FECV), 103-142 (GHEN…EYEC), 148-187 (SHTQ…WVCC), 192-231 (GHES…NEQG), 250-289 (FHSR…DPQQ), and 301-339 (AHSQ…PEGL). Positions 176–178 (LYR) match the LYR motif; required for interaction with HSC20 motif.

Belongs to the WD repeat CIA1 family. As to quaternary structure, component of the CIA complex. Interacts with CIAO2A and forms a complex with CIAO2B and MMS19; the interactions with CIAO2A and CIAO2B are mutually exclusive. Interacts with CHD1L, ERCC2, IREB2 and POLD1. Component of the MMXD complex, which includes CIAO1, ERCC2, CIAO2B, MMS19 and SLC25A5. Interacts with WT1. Interacts with CIAO3. Interacts (via LYR motif) with HSC20.

Its subcellular location is the cytoplasm. Key component of the cytosolic iron-sulfur protein assembly (CIA) complex, a multiprotein complex that mediates the incorporation of iron-sulfur cluster into extramitochondrial Fe/S proteins. As a CIA complex component, interacts specifically with CIAO2A or CIAO2B and MMS19 to assist different branches of iron-sulfur protein assembly, depending of its interactors. The complex CIAO1:CIAO2B:MMS19 binds to and facilitates the assembly of most cytosolic-nuclear Fe/S proteins. CIAO1:CIAO2A specifically matures ACO1 and stabilizes IREB2. Seems to specifically modulate the transactivation activity of WT1. As part of the mitotic spindle-associated MMXD complex it may play a role in chromosome segregation. In Homo sapiens (Human), this protein is Probable cytosolic iron-sulfur protein assembly protein CIAO1.